A 301-amino-acid polypeptide reads, in one-letter code: Ribosomal protein L11 methyltransferase (301 aa).

Thr-146, Gly-167, Asp-189, and Asn-234 together coordinate S-adenosyl-L-methionine.

This sequence belongs to the methyltransferase superfamily. PrmA family.

Its subcellular location is the cytoplasm. It catalyses the reaction L-lysyl-[protein] + 3 S-adenosyl-L-methionine = N(6),N(6),N(6)-trimethyl-L-lysyl-[protein] + 3 S-adenosyl-L-homocysteine + 3 H(+). Its function is as follows. Methylates ribosomal protein L11. This Acinetobacter baumannii (strain AB307-0294) protein is Ribosomal protein L11 methyltransferase.